A 157-amino-acid polypeptide reads, in one-letter code: Large ribosomal subunit protein uL13m (157 aa).

Residues 1–29 (MSTLNGQTALAYAKVWHHVSAKNVPLGRL) constitute a mitochondrion transit peptide.

It belongs to the universal ribosomal protein uL13 family. In terms of assembly, component of the mitochondrial large ribosomal subunit (mt-LSU). Mature yeast 74S mitochondrial ribosomes consist of a small (37S) and a large (54S) subunit. The 37S small subunit contains a 15S ribosomal RNA (15S mt-rRNA) and at least 32 different proteins. The 54S large subunit contains a 21S rRNA (21S mt-rRNA) and at least 45 different proteins.

The protein localises to the mitochondrion. In terms of biological role, component of the mitochondrial ribosome (mitoribosome), a dedicated translation machinery responsible for the synthesis of mitochondrial genome-encoded proteins, including at least some of the essential transmembrane subunits of the mitochondrial respiratory chain. The mitoribosomes are attached to the mitochondrial inner membrane and translation products are cotranslationally integrated into the membrane. This is Large ribosomal subunit protein uL13m from Schizosaccharomyces pombe (strain 972 / ATCC 24843) (Fission yeast).